We begin with the raw amino-acid sequence, 291 residues long: Deaminated glutathione amidase (291 aa).

The 256-residue stretch at 13 to 268 folds into the CN hydrolase domain; it reads KRIGLGQITS…NDIAFVDIDL (256 aa). Glutamate 52 acts as the Proton acceptor in catalysis. The active-site Proton donor is lysine 130. Cysteine 172 serves as the catalytic Nucleophile.

This sequence belongs to the carbon-nitrogen hydrolase superfamily. NIT1/NIT2 family.

The enzyme catalyses N-(4-oxoglutaryl)-L-cysteinylglycine + H2O = L-cysteinylglycine + 2-oxoglutarate. Catalyzes the hydrolysis of the amide bond in N-(4-oxoglutarate)-L-cysteinylglycine (deaminated glutathione), a metabolite repair reaction to dispose of the harmful deaminated glutathione. The polypeptide is Deaminated glutathione amidase (nit1-1) (Dictyostelium discoideum (Social amoeba)).